A 194-amino-acid polypeptide reads, in one-letter code: Fe/S biogenesis protein NfuA (194 aa).

[4Fe-4S] cluster is bound by residues C152 and C155.

This sequence belongs to the NfuA family. As to quaternary structure, homodimer. It depends on [4Fe-4S] cluster as a cofactor.

In terms of biological role, involved in iron-sulfur cluster biogenesis. Binds a 4Fe-4S cluster, can transfer this cluster to apoproteins, and thereby intervenes in the maturation of Fe/S proteins. Could also act as a scaffold/chaperone for damaged Fe/S proteins. In Stutzerimonas stutzeri (strain A1501) (Pseudomonas stutzeri), this protein is Fe/S biogenesis protein NfuA.